Here is a 233-residue protein sequence, read N- to C-terminus: Cytochrome c biogenesis ATP-binding export protein CcmA (233 aa).

The region spanning 17–233 (FAGEDLLCVR…AAGLFLEDEG (217 aa)) is the ABC transporter domain. Residue 49-56 (GPNGSGKS) participates in ATP binding.

The protein belongs to the ABC transporter superfamily. CcmA exporter (TC 3.A.1.107) family. The complex is composed of two ATP-binding proteins (CcmA) and two transmembrane proteins (CcmB).

It is found in the cell inner membrane. The enzyme catalyses heme b(in) + ATP + H2O = heme b(out) + ADP + phosphate + H(+). Its function is as follows. Part of the ABC transporter complex CcmAB involved in the biogenesis of c-type cytochromes; once thought to export heme, this seems not to be the case, but its exact role is uncertain. Responsible for energy coupling to the transport system. The protein is Cytochrome c biogenesis ATP-binding export protein CcmA of Rhodospirillum rubrum (strain ATCC 11170 / ATH 1.1.1 / DSM 467 / LMG 4362 / NCIMB 8255 / S1).